A 23-amino-acid chain; its full sequence is Phallacidin proprotein (23 aa).

Residue proline 1 is a propeptide. Residues 2–8 constitute a cross-link (cyclopeptide (Ala-Pro)); sequence AWLVDCP. The segment at residues 3-7 is a cross-link (2'-cysteinyl-6'-hydroxytryptophan sulfoxide (Trp-Cys)); the sequence is WLVDC. A propeptide spanning residues 9 to 23 is cleaved from the precursor; it reads CVGDDISRLLTRGEK.

This sequence belongs to the MSDIN fungal toxin family. In terms of processing, processed by the macrocyclase-peptidase enzyme POPB to yield a toxic cyclic heptapeptide. POPB first removes 10 residues from the N-terminus. Conformational trapping of the remaining peptide forces the enzyme to release this intermediate rather than proceed to macrocyclization. The enzyme rebinds the remaining peptide in a different conformation and catalyzes macrocyclization of the N-terminal 7 residues.

Its function is as follows. Major toxin that belongs to the bicyclic heptapeptides called phallotoxins. Although structurally related to amatoxins, phallotoxins have a different mode of action, which is the stabilization of F-actin. Phallotoxins are poisonous when administered parenterally, but not orally because of poor absorption. This Amanita rimosa protein is Phallacidin proprotein.